The primary structure comprises 512 residues: Serine palmitoyltransferase 3 (512 aa).

Residue Lys345 is modified to N6-(pyridoxal phosphate)lysine.

This sequence belongs to the class-II pyridoxal-phosphate-dependent aminotransferase family. Heterodimer of sptl-1/sptl-3. Requires pyridoxal 5'-phosphate as cofactor.

It catalyses the reaction L-serine + hexadecanoyl-CoA + H(+) = 3-oxosphinganine + CO2 + CoA. Its pathway is lipid metabolism; sphingolipid metabolism. Component of the serine palmitoyltransferase (SPT) that catalyzes the first committed step in sphingolipid biosynthesis, which is the condensation of an acyl-CoA species and L-serine. The catalytic core is composed of a heterodimer of sptl-1 and sptl-2 or sptl-1 and sptl-3. Required for the specification of abicobasal polarity and development of the gut lumen. This Caenorhabditis elegans protein is Serine palmitoyltransferase 3 (sptl-3).